A 274-amino-acid polypeptide reads, in one-letter code: Acyl-[acyl-carrier-protein]--UDP-N-acetylglucosamine O-acyltransferase (274 aa).

It belongs to the transferase hexapeptide repeat family. LpxA subfamily. In terms of assembly, homotrimer.

It localises to the cytoplasm. It catalyses the reaction a (3R)-hydroxyacyl-[ACP] + UDP-N-acetyl-alpha-D-glucosamine = a UDP-3-O-[(3R)-3-hydroxyacyl]-N-acetyl-alpha-D-glucosamine + holo-[ACP]. It participates in glycolipid biosynthesis; lipid IV(A) biosynthesis; lipid IV(A) from (3R)-3-hydroxytetradecanoyl-[acyl-carrier-protein] and UDP-N-acetyl-alpha-D-glucosamine: step 1/6. Involved in the biosynthesis of lipid A, a phosphorylated glycolipid that anchors the lipopolysaccharide to the outer membrane of the cell. The protein is Acyl-[acyl-carrier-protein]--UDP-N-acetylglucosamine O-acyltransferase of Bartonella bacilliformis (strain ATCC 35685 / KC583 / Herrer 020/F12,63).